We begin with the raw amino-acid sequence, 467 residues long: MQYYKELARRLHTLQSKNEKEALEKQIDFLDKLVVEVDSLVHEQDLRPLLEFISPTESWFLLGTATIFYIKLLTHPDPESIDVVIKEAYVVRAHRILSIFQEQFIENVVKEINWEILAILISLSGIENGLVRNLSEFLSTSILSAVPRQKFLLYLLEKYQINLFHREERLTDQGRPVAFELPPDKFHSDQSKALLEPKWKTKNYLISHLIFWIIDQQSSSSIEVCWHRIIPSVLRILNDLSPNIKLQGIELVNRLLKITEREFLLYTGILKILKDDLLVFYTFIPPRFTIQTSVTLINASFATLVSLYPEENENLNSIMLNGINSVFQFAFDYPLILQAAFSQIMVLTDKMNVSYLPYLTLTLDELCRIIQNPQIIQIPSTLSFFLEILTKLLEIYSYRISAHHVELLMALVVCSRNYMRCNLQEHHNAIVQALQNLFTLIKLNITVEQLGDYNVILPLLEPLQIPL.

Positions 4 to 45 (YKELARRLHTLQSKNEKEALEKQIDFLDKLVVEVDSLVHEQD) form a coiled coil.

This sequence belongs to the TTI2 family. Component of the TTT complex composed of tel2, tti1 and tti2. Interacts with tel2 and ttiI1. Component of the ASTRA complex composed of at least rvb1, rvb2, tra1, tel2, tti1 and tti2.

It localises to the nucleus. In terms of biological role, component of the tel2-tti1-tti2 (TTT) complex that stabilizes protein levels of the phosphatidylinositol 3-kinase-related protein kinase (PIKK) family proteins. The TTT complex is involved in the cellular resistance to DNA damage stresses, like ionizing radiation (IR), ultraviolet (UV) and mitomycin C (MMC). Component of the ASTRA complex involved in chromatin remodeling. In Schizosaccharomyces pombe (strain 972 / ATCC 24843) (Fission yeast), this protein is Tel2-interacting protein 2.